The following is a 65-amino-acid chain: Large ribosomal subunit protein bL35 (65 aa).

The interval 1–51 (MPKMKTNRAAAKRFKKTANGGLKSANAYTSHRFHGKTKKQRRQLRGTDMMD) is disordered. A compositionally biased stretch (basic residues) spans 31–44 (HRFHGKTKKQRRQL).

Belongs to the bacterial ribosomal protein bL35 family.

The protein is Large ribosomal subunit protein bL35 of Pediococcus pentosaceus (strain ATCC 25745 / CCUG 21536 / LMG 10740 / 183-1w).